The sequence spans 276 residues: Large ribosomal subunit protein uL2 (276 aa).

Residues 28–38 (RPEKSLTEKLS) show a composition bias toward basic and acidic residues. Disordered stretches follow at residues 28–57 (RPEK…QGGG) and 219–276 (TVRG…RRKK).

Belongs to the universal ribosomal protein uL2 family. Part of the 50S ribosomal subunit. Forms a bridge to the 30S subunit in the 70S ribosome.

Functionally, one of the primary rRNA binding proteins. Required for association of the 30S and 50S subunits to form the 70S ribosome, for tRNA binding and peptide bond formation. It has been suggested to have peptidyltransferase activity; this is somewhat controversial. Makes several contacts with the 16S rRNA in the 70S ribosome. The protein is Large ribosomal subunit protein uL2 of Exiguobacterium sp. (strain ATCC BAA-1283 / AT1b).